The following is a 325-amino-acid chain: Acetyl-coenzyme A carboxylase carboxyl transferase subunit alpha (325 aa).

The 255-residue stretch at arginine 38 to threonine 292 folds into the CoA carboxyltransferase C-terminal domain.

Belongs to the AccA family. As to quaternary structure, acetyl-CoA carboxylase is a heterohexamer composed of biotin carboxyl carrier protein (AccB), biotin carboxylase (AccC) and two subunits each of ACCase subunit alpha (AccA) and ACCase subunit beta (AccD).

Its subcellular location is the cytoplasm. It catalyses the reaction N(6)-carboxybiotinyl-L-lysyl-[protein] + acetyl-CoA = N(6)-biotinyl-L-lysyl-[protein] + malonyl-CoA. It participates in lipid metabolism; malonyl-CoA biosynthesis; malonyl-CoA from acetyl-CoA: step 1/1. Inhibited by pyrrolidine dione antibiotics moiramide B (CPD1) and CPD2. Functionally, component of the acetyl coenzyme A carboxylase (ACC) complex. First, biotin carboxylase catalyzes the carboxylation of biotin on its carrier protein (BCCP) and then the CO(2) group is transferred by the carboxyltransferase to acetyl-CoA to form malonyl-CoA. This is Acetyl-coenzyme A carboxylase carboxyl transferase subunit alpha from Bacillus subtilis (strain 168).